The primary structure comprises 363 residues: Peptide chain release factor 1 (363 aa).

Glutamine 237 is subject to N5-methylglutamine. A compositionally biased stretch (basic and acidic residues) spans 284-296 (EDEKRRSAEESTR). Residues 284-305 (EDEKRRSAEESTRRSLVASGDR) are disordered.

Belongs to the prokaryotic/mitochondrial release factor family. Methylated by PrmC. Methylation increases the termination efficiency of RF1.

The protein localises to the cytoplasm. Peptide chain release factor 1 directs the termination of translation in response to the peptide chain termination codons UAG and UAA. The polypeptide is Peptide chain release factor 1 (Shewanella sp. (strain MR-4)).